We begin with the raw amino-acid sequence, 447 residues long: Tubulin beta chain (447 aa).

Glutamine 11, glutamate 69, serine 138, glycine 142, threonine 143, glycine 144, asparagine 204, and asparagine 226 together coordinate GTP. Residue glutamate 69 coordinates Mg(2+).

Belongs to the tubulin family. Dimer of alpha and beta chains. A typical microtubule is a hollow water-filled tube with an outer diameter of 25 nm and an inner diameter of 15 nM. Alpha-beta heterodimers associate head-to-tail to form protofilaments running lengthwise along the microtubule wall with the beta-tubulin subunit facing the microtubule plus end conferring a structural polarity. Microtubules usually have 13 protofilaments but different protofilament numbers can be found in some organisms and specialized cells. Requires Mg(2+) as cofactor.

The protein resides in the cytoplasm. The protein localises to the cytoskeleton. Its function is as follows. Tubulin is the major constituent of microtubules, a cylinder consisting of laterally associated linear protofilaments composed of alpha- and beta-tubulin heterodimers. Microtubules grow by the addition of GTP-tubulin dimers to the microtubule end, where a stabilizing cap forms. Below the cap, tubulin dimers are in GDP-bound state, owing to GTPase activity of alpha-tubulin. The sequence is that of Tubulin beta chain (TUB2) from Penicillium digitatum (Green mold).